An 869-amino-acid polypeptide reads, in one-letter code: Aminopeptidase N (869 aa).

Substrate contacts are provided by residues Glu122 and 262–266; that span reads GAMEN. A Zn(2+)-binding site is contributed by His298. The active-site Proton acceptor is Glu299. Zn(2+) contacts are provided by His302 and Glu321.

The protein belongs to the peptidase M1 family. It depends on Zn(2+) as a cofactor.

It is found in the cell inner membrane. The catalysed reaction is Release of an N-terminal amino acid, Xaa-|-Yaa- from a peptide, amide or arylamide. Xaa is preferably Ala, but may be most amino acids including Pro (slow action). When a terminal hydrophobic residue is followed by a prolyl residue, the two may be released as an intact Xaa-Pro dipeptide.. In terms of biological role, aminopeptidase N is involved in the degradation of intracellular peptides generated by protein breakdown during normal growth as well as in response to nutrient starvation. The protein is Aminopeptidase N (pepN) of Haemophilus influenzae (strain ATCC 51907 / DSM 11121 / KW20 / Rd).